An 87-amino-acid chain; its full sequence is Putative defensin-like protein 231 (87 aa).

Positions 1 to 26 are cleaved as a signal peptide; it reads MKFATCFLVSYVLVFLVLSVCKEVEA. 4 cysteine pairs are disulfide-bonded: Cys-30–Cys-85, Cys-40–Cys-66, Cys-48–Cys-79, and Cys-64–Cys-81.

This sequence belongs to the DEFL family.

It is found in the secreted. The protein is Putative defensin-like protein 231 (SCRL25) of Arabidopsis thaliana (Mouse-ear cress).